The chain runs to 447 residues: Tubulin alpha-1 chain (447 aa).

Residues glutamine 11, glutamate 72, serine 141, glycine 145, threonine 146, threonine 180, asparagine 207, and asparagine 229 each contribute to the GTP site. Position 72 (glutamate 72) interacts with Mg(2+). The active site involves glutamate 255.

Belongs to the tubulin family. Dimer of alpha and beta chains. A typical microtubule is a hollow water-filled tube with an outer diameter of 25 nm and an inner diameter of 15 nM. Alpha-beta heterodimers associate head-to-tail to form protofilaments running lengthwise along the microtubule wall with the beta-tubulin subunit facing the microtubule plus end conferring a structural polarity. Microtubules usually have 13 protofilaments but different protofilament numbers can be found in some organisms and specialized cells. It depends on Mg(2+) as a cofactor.

The protein resides in the cytoplasm. The protein localises to the cytoskeleton. The catalysed reaction is GTP + H2O = GDP + phosphate + H(+). Its function is as follows. Tubulin is the major constituent of microtubules, a cylinder consisting of laterally associated linear protofilaments composed of alpha- and beta-tubulin heterodimers. Microtubules grow by the addition of GTP-tubulin dimers to the microtubule end, where a stabilizing cap forms. Below the cap, tubulin dimers are in GDP-bound state, owing to GTPase activity of alpha-tubulin. The sequence is that of Tubulin alpha-1 chain (TUB1) from Saccharomyces cerevisiae (strain ATCC 204508 / S288c) (Baker's yeast).